The sequence spans 148 residues: Snaclec 4 (148 aa).

The first 23 residues, 1 to 23, serve as a signal peptide directing secretion; sequence MGRFIFVSFSLLVVFFSLSGTEA. The 115-residue stretch at 34–148 folds into the C-type lectin domain; sequence YDQNCYKAFE…DTQFRLQEPG (115 aa).

This sequence belongs to the snaclec family. Heterodimer; disulfide-linked. Post-translationally, contains disulfide bonds. As to expression, expressed by the venom gland.

It is found in the secreted. Functionally, interferes with one step of hemostasis (modulation of platelet aggregation, or coagulation cascade, for example). The polypeptide is Snaclec 4 (Echis pyramidum leakeyi (Leakey's carpet viper)).